Consider the following 375-residue polypeptide: Proton-coupled zinc antiporter SLC30A8 (375 aa).

Residues 1–68 (MKGPEKAYLV…QREQTSAKKK (68 aa)) lie on the Cytoplasmic side of the membrane. Zn(2+) is bound by residues His46, Cys47, and His48. Residues 46 to 48 (HCH) carry the HCH Motif; seals regulatory zinc-binding pocket motif. The helical transmembrane segment at 69–89 (LCIASLICFVFISAEIVGGYI) threads the bilayer. Topologically, residues 90-98 (AGSLAVVTD) are lumenal, vesicle. Residues 99-119 (AAHLLVDLSSFFISLGSLWLS) traverse the membrane as a helical segment. 2 residues coordinate Zn(2+): His101 and Asp105. Residues 120-135 (SKSSTMRLTFGWYRAE) lie on the Cytoplasmic side of the membrane. Residues 136 to 156 (ILGALMSIITIWLVTGVLVYL) traverse the membrane as a helical segment. Over 157–170 (AIERIIRPDYTIDG) the chain is Lumenal, vesicle. Residues 171-191 (TVMLITSACALGANVVLALIL) form a helical membrane-spanning segment. Over 192 to 223 (HQSGHGHSHAGGKHEHMASEYKPQTNASIRAA) the chain is Cytoplasmic. A helical membrane pass occupies residues 224-244 (FIHVIGDLFQSISVLISALII). Residues His226 and Asp230 each contribute to the Zn(2+) site. Residues 245–251 (YFKPEYK) are Lumenal, vesicle-facing. A helical membrane pass occupies residues 252–272 (IADPICTFIFSIFVLITTVTV). Residues 273–375 (LRDLLNILME…ECMFCYEPTQ (103 aa)) are Cytoplasmic-facing. Zn(2+) contacts are provided by His307, His324, His351, Glu358, Cys367, and Cys370.

This sequence belongs to the cation diffusion facilitator (CDF) transporter (TC 2.A.4) family. SLC30A subfamily. As to quaternary structure, homodimer.

It localises to the cytoplasmic vesicle. Its subcellular location is the secretory vesicle membrane. The protein localises to the cell membrane. The enzyme catalyses Zn(2+)(in) + 2 H(+)(out) = Zn(2+)(out) + 2 H(+)(in). Its function is as follows. Proton-coupled zinc ion antiporter mediating the entry of zinc into the lumen of pancreatic beta cell secretory granules, thereby regulating insulin secretion. This chain is Proton-coupled zinc antiporter SLC30A8 (slc30a8), found in Xenopus laevis (African clawed frog).